The chain runs to 57 residues: Small ribosomal subunit protein eS27 (57 aa).

Zn(2+)-binding residues include cysteine 10, cysteine 13, cysteine 29, and cysteine 32. The C4-type zinc-finger motif lies at 10-32 (CPDCENEQSLFEKAASEVSCAVC).

The protein belongs to the eukaryotic ribosomal protein eS27 family. As to quaternary structure, part of the 30S ribosomal subunit. The cofactor is Zn(2+).

This is Small ribosomal subunit protein eS27 from Haloarcula marismortui (strain ATCC 43049 / DSM 3752 / JCM 8966 / VKM B-1809) (Halobacterium marismortui).